Consider the following 228-residue polypeptide: 2,3-bisphosphoglycerate-dependent phosphoglycerate mutase (228 aa).

Substrate is bound by residues Arg-8–Asn-15, Thr-21–Gly-22, Arg-60, Glu-87–Tyr-90, Lys-98, Arg-114–Arg-115, and Gly-183–Asn-184. The active-site Tele-phosphohistidine intermediate is the His-9. Glu-87 functions as the Proton donor/acceptor in the catalytic mechanism.

Belongs to the phosphoglycerate mutase family. BPG-dependent PGAM subfamily.

It catalyses the reaction (2R)-2-phosphoglycerate = (2R)-3-phosphoglycerate. The protein operates within carbohydrate degradation; glycolysis; pyruvate from D-glyceraldehyde 3-phosphate: step 3/5. Catalyzes the interconversion of 2-phosphoglycerate and 3-phosphoglycerate. The protein is 2,3-bisphosphoglycerate-dependent phosphoglycerate mutase of Staphylococcus saprophyticus subsp. saprophyticus (strain ATCC 15305 / DSM 20229 / NCIMB 8711 / NCTC 7292 / S-41).